We begin with the raw amino-acid sequence, 196 residues long: DnaA initiator-associating protein DiaA (196 aa).

In terms of domain architecture, SIS spans 34 to 196 (LVQSLLNGNK…DNTLFPHQDD (163 aa)).

This sequence belongs to the SIS family. DiaA subfamily. In terms of assembly, homotetramer; dimer of dimers.

Required for the timely initiation of chromosomal replication via direct interactions with the DnaA initiator protein. The chain is DnaA initiator-associating protein DiaA from Yersinia enterocolitica serotype O:8 / biotype 1B (strain NCTC 13174 / 8081).